The sequence spans 227 residues: Holliday junction branch migration complex subunit RuvA (227 aa).

Positions 1 to 64 (MFESISGILT…EDALRLFGFS (64 aa)) are domain I. The tract at residues 65–143 (NVQERTLFLS…LTDAASCAQS (79 aa)) is domain II. Residues 144–158 (QTDDRAAHPSNLGCA) form a flexible linker region. Residues 159-227 (PHAREIEDLV…HPHAVAPAAE (69 aa)) are domain III.

This sequence belongs to the RuvA family. In terms of assembly, homotetramer. Forms an RuvA(8)-RuvB(12)-Holliday junction (HJ) complex. HJ DNA is sandwiched between 2 RuvA tetramers; dsDNA enters through RuvA and exits via RuvB. An RuvB hexamer assembles on each DNA strand where it exits the tetramer. Each RuvB hexamer is contacted by two RuvA subunits (via domain III) on 2 adjacent RuvB subunits; this complex drives branch migration. In the full resolvosome a probable DNA-RuvA(4)-RuvB(12)-RuvC(2) complex forms which resolves the HJ.

The protein localises to the cytoplasm. Functionally, the RuvA-RuvB-RuvC complex processes Holliday junction (HJ) DNA during genetic recombination and DNA repair, while the RuvA-RuvB complex plays an important role in the rescue of blocked DNA replication forks via replication fork reversal (RFR). RuvA specifically binds to HJ cruciform DNA, conferring on it an open structure. The RuvB hexamer acts as an ATP-dependent pump, pulling dsDNA into and through the RuvAB complex. HJ branch migration allows RuvC to scan DNA until it finds its consensus sequence, where it cleaves and resolves the cruciform DNA. This Treponema pallidum (strain Nichols) protein is Holliday junction branch migration complex subunit RuvA.